The sequence spans 375 residues: MKFELDTTDGRARRGRLVFDRGVVETPCFMPVGTYGTVKGMTPEEVEATGAQIILGNTFHLWLRPGQEIMKLHGDLHDFMQWKGPILTDSGGFQVFSLGDIRKITEQGVHFRNPINGDPIFLDPEKSMEIQYDLGSDIVMIFDECTPYPADWDYAKRSMEMSLRWAKRSRERFDSLGNKNALFGIIQGSVYEDLRDISVKGLVDIGFDGYAVGGLAVGEPKADMHRILEHVCPQIPADKPRYLMGVGKPEDLVEGVRRGIDMFDCVMPTRNARNGHLFVTDGVVKIRNAKYKSDTGPLDPECDCYTCRNYSRAYLHHLDRCNEILGARLNTIHNLRYYQRLMAGLRKAIEEGKLESFVTDFYQRQGREVPPLNVD.

Aspartate 89 acts as the Proton acceptor in catalysis. Residues 89–93, aspartate 143, glutamine 187, and glycine 214 contribute to the substrate site; that span reads DSGGF. The RNA binding stretch occupies residues 245-251; the sequence is GVGKPED. The Nucleophile role is filled by aspartate 264. The RNA binding; important for wobble base 34 recognition stretch occupies residues 269-273; it reads TRNAR. 4 residues coordinate Zn(2+): cysteine 302, cysteine 304, cysteine 307, and histidine 333.

It belongs to the queuine tRNA-ribosyltransferase family. As to quaternary structure, homodimer. Within each dimer, one monomer is responsible for RNA recognition and catalysis, while the other monomer binds to the replacement base PreQ1. Requires Zn(2+) as cofactor.

The enzyme catalyses 7-aminomethyl-7-carbaguanine + guanosine(34) in tRNA = 7-aminomethyl-7-carbaguanosine(34) in tRNA + guanine. The protein operates within tRNA modification; tRNA-queuosine biosynthesis. Catalyzes the base-exchange of a guanine (G) residue with the queuine precursor 7-aminomethyl-7-deazaguanine (PreQ1) at position 34 (anticodon wobble position) in tRNAs with GU(N) anticodons (tRNA-Asp, -Asn, -His and -Tyr). Catalysis occurs through a double-displacement mechanism. The nucleophile active site attacks the C1' of nucleotide 34 to detach the guanine base from the RNA, forming a covalent enzyme-RNA intermediate. The proton acceptor active site deprotonates the incoming PreQ1, allowing a nucleophilic attack on the C1' of the ribose to form the product. After dissociation, two additional enzymatic reactions on the tRNA convert PreQ1 to queuine (Q), resulting in the hypermodified nucleoside queuosine (7-(((4,5-cis-dihydroxy-2-cyclopenten-1-yl)amino)methyl)-7-deazaguanosine). In Escherichia coli O81 (strain ED1a), this protein is Queuine tRNA-ribosyltransferase.